Reading from the N-terminus, the 46-residue chain is Large ribosomal subunit protein bL34c (46 aa).

Belongs to the bacterial ribosomal protein bL34 family.

It localises to the plastid. The protein localises to the chloroplast. The chain is Large ribosomal subunit protein bL34c (rpl34) from Guillardia theta (Cryptophyte).